We begin with the raw amino-acid sequence, 253 residues long: Complement C1q subcomponent subunit B (253 aa).

Residues 1–25 (MKTQWGEVWTHLLLLLLGFLHVSWA) form the signal peptide. Gln26 is modified (pyrrolidone carboxylic acid). In terms of domain architecture, Collagen-like spans 29–112 (CTGPPGIPGI…GPRGPKGDSG (84 aa)). Residues Pro33, Pro36, Pro39, Pro51, and Pro54 each carry the 4-hydroxyproline modification. Residues 35 to 115 (IPGIPGVPGV…GPKGDSGDYG (81 aa)) are disordered. 5-hydroxylysine is present on residues Lys57 and Lys60. 4-hydroxyproline is present on Pro63. Lys75 is subject to 5-hydroxylysine. The segment covering 78 to 96 (PGIPGTPGKVGPKGPVGPK) has biased composition (low complexity). Residues Pro81 and Pro84 each carry the 4-hydroxyproline modification. 5-hydroxylysine occurs at positions 90 and 96. At Pro99 the chain carries 4-hydroxyproline. Residue Lys108 is modified to 5-hydroxylysine. The region spanning 115-253 (GATQKVAFSA…GFLLFPDMDA (139 aa)) is the C1q domain. An intrachain disulfide couples Cys179 to Cys198. The Ca(2+) site is built by Asp199, Tyr200, and Gln206.

In terms of assembly, core component of the complement C1 complex, a calcium-dependent complex composed of 1 molecule of the C1Q subcomplex, 2 molecules of C1R and 2 molecules of C1S. The C1Q subcomplex is composed 18 subunits: 3 chains of C1QA, C1QB, and C1QC trimerize to form 6 collagen-like triple helices connected to six globular ligand-recognition modules (C1q domain). Hydroxylated on lysine and proline residues. Hydroxylated lysine residues can be glycosylated. Mouse C1Q contains up to 64.0 hydroxylysine-galactosylglucose residues. Total percentage hydroxylysine residues glycosylated is 95.1%. Contains no hydroxylysine-monosaccharides. In terms of tissue distribution, highest expression in thioglycolate-activated peritoneal macrophages. Also found in spleen, thymus and heart. Very weak expression liver, kidney, lung and intestine.

It localises to the secreted. The protein localises to the cell surface. With respect to regulation, the C1Q subcomplex is inhibited by sulfated molecules, such as triterpenoid sulfates, heparan sulfate, or chondroitin sulfates. In terms of biological role, core component of the complement C1 complex, a multiprotein complex that initiates the classical pathway of the complement system, a cascade of proteins that leads to phagocytosis and breakdown of pathogens and signaling that strengthens the adaptive immune system. The classical complement pathway is initiated by the C1Q subcomplex of the C1 complex, which specifically binds IgG or IgM immunoglobulins complexed with antigens, forming antigen-antibody complexes on the surface of pathogens: C1QA, together with C1QB and C1QC, specifically recognizes and binds the Fc regions of IgG or IgM via its C1q domain. Immunoglobulin-binding activates the proenzyme C1R, which cleaves C1S, initiating the proteolytic cascade of the complement system. The C1Q subcomplex is activated by a hexamer of IgG complexed with antigens, while it is activated by a pentameric IgM. The C1Q subcomplex also recognizes and binds phosphatidylserine exposed on the surface of cells undergoing programmed cell death, possibly promoting activation of the complement system. This chain is Complement C1q subcomponent subunit B, found in Mus musculus (Mouse).